We begin with the raw amino-acid sequence, 257 residues long: Ribonuclease HII (257 aa).

Residues 72–257 enclose the RNase H type-2 domain; it reads TYIAGIDEVG…FAPIKDMIQK (186 aa). Residues Asp78, Glu79, and Asp170 each coordinate a divalent metal cation.

Belongs to the RNase HII family. The cofactor is Mn(2+). Mg(2+) serves as cofactor.

The protein localises to the cytoplasm. The enzyme catalyses Endonucleolytic cleavage to 5'-phosphomonoester.. In terms of biological role, endonuclease that specifically degrades the RNA of RNA-DNA hybrids. This chain is Ribonuclease HII, found in Bacillus cereus (strain G9842).